Here is a 387-residue protein sequence, read N- to C-terminus: MPTNWLLPESIADVLPSEARKIEELRRRMLDLFRTYGYELVMPPMLEYIESLLSGTGHDLDLKTFKLVDQLSGRTIGLRADITPQVARIDAHLLNRAGVTRLCYAGSVLHTRPSGFHVTREPLQIGAEIYGHAGLEADLEIQELMLAALSAAGLADVRLDLCHVGVVAALLEQSPIAARIQDDLFTALAAKDVPALRAITVDLPPAQRDAINLLPALYGGVDVLARARKQLPALPAIGRALDDLATLAERAGGATVNIDLADLRGYHYHSGVMFTAYVAGVPNAVARGGRYDKVGEAFGRARPATGFSLDLREVAGISPVEARAAAIHAPWSGDAKLREAIAALRAAGEIVIQSLPGHPEDLEEFAYDRQLVEESGRWIVKPRNASI.

This sequence belongs to the class-II aminoacyl-tRNA synthetase family. HisZ subfamily. As to quaternary structure, heteromultimer composed of HisG and HisZ subunits.

It localises to the cytoplasm. Its pathway is amino-acid biosynthesis; L-histidine biosynthesis; L-histidine from 5-phospho-alpha-D-ribose 1-diphosphate: step 1/9. Functionally, required for the first step of histidine biosynthesis. May allow the feedback regulation of ATP phosphoribosyltransferase activity by histidine. This chain is ATP phosphoribosyltransferase regulatory subunit, found in Ralstonia pickettii (strain 12J).